The sequence spans 457 residues: DNA repair protein RadA (457 aa).

Residues 10 to 27 (CQECGYESAKWMGKCPGC) form a C4-type zinc finger. 97–104 (GDPGIGKS) contributes to the ATP binding site. Residues 254–258 (KNRFG) carry the RadA KNRFG motif motif. Positions 353–457 (DAYVNVAGGV…QDALEVTLGR (105 aa)) are lon-protease-like.

Belongs to the RecA family. RadA subfamily.

In terms of biological role, DNA-dependent ATPase involved in processing of recombination intermediates, plays a role in repairing DNA breaks. Stimulates the branch migration of RecA-mediated strand transfer reactions, allowing the 3' invading strand to extend heteroduplex DNA faster. Binds ssDNA in the presence of ADP but not other nucleotides, has ATPase activity that is stimulated by ssDNA and various branched DNA structures, but inhibited by SSB. Does not have RecA's homology-searching function. The chain is DNA repair protein RadA from Halalkalibacterium halodurans (strain ATCC BAA-125 / DSM 18197 / FERM 7344 / JCM 9153 / C-125) (Bacillus halodurans).